The following is an 836-amino-acid chain: Ethylene receptor 3 (836 aa).

Helical transmembrane passes span 137–157 (LIAA…AGLR), 166–186 (LVQF…TAFT), and 204–224 (LTAL…PQLL). 2 residues coordinate Cu cation: Cys-176 and His-180. The GAF domain occupies 269–413 (DRHTVLYTTL…VVAGQVAVAL (145 aa)). The stretch at 416–452 (ATLLEESRAMRDRLAEQNRELLQARRDALMANEARQA) forms a coiled coil. The Histidine kinase domain occupies 457-691 (MSQGMRRPIH…LVLRFQLQSP (235 aa)). One can recognise a Response regulatory domain in the interval 718-834 (LLIDDDDDIN…LKDELARILQ (117 aa)).

It belongs to the ethylene receptor family. The cofactor is Cu cation.

It is found in the endoplasmic reticulum membrane. It carries out the reaction ATP + protein L-histidine = ADP + protein N-phospho-L-histidine.. Ethylene receptor related to bacterial two-component regulators. Acts as a negative regulator of ethylene signaling. May delay the transition from the vegetative stage to the floral stage by up-regulating GI (GIGANTEA) and RCN1 and cause starch accumulation in stems by down-regulating the alpha-amylase AMY3D. The polypeptide is Ethylene receptor 3 (Oryza sativa subsp. indica (Rice)).